A 2261-amino-acid chain; its full sequence is Phospholipid-transporting ATPase ABCA1 (2261 aa).

Cys-3 is lipidated: S-palmitoyl cysteine. A glycan (N-linked (GlcNAc...) asparagine) is linked at Asn-14. A helical transmembrane segment spans residues 22–42 (TCQLLLEVAWPLFIFLILISV). Cys-23 carries the S-palmitoyl cysteine lipid modification. Residues 43 to 639 (RLSYPPYEQH…DIFLRVMSRS (597 aa)) are Extracellular-facing. The segment at 69-80 (WVQGIICNANNP) is annulus domain 1. Cys-75 and Cys-309 are oxidised to a cystine. 8 N-linked (GlcNAc...) asparagine glycosylation sites follow: Asn-98, Asn-151, Asn-161, Asn-196, Asn-244, Asn-292, Asn-337, and Asn-349. Positions 368 to 379 (SRIIWKALKPLL) are annulus domain 2. N-linked (GlcNAc...) asparagine glycosylation is found at Asn-400, Asn-478, Asn-489, and Asn-521. Positions 564 to 594 (ERTNKIKDGYWDPGPRADPFEDMRYVWGGFA) are gateway domain. The next 5 helical transmembrane spans lie at 640–660 (MPLF…KSIV), 683–703 (FSWF…LVVI), 716–736 (SVVF…CFLI), 745–765 (LAAA…VLCV), and 777–797 (IFAS…FALF). An N-linked (GlcNAc...) asparagine glycan is attached at Asn-820. Residues 827-847 (MMLFDTFLYGVMTWYIEAVFP) form a helical membrane-spanning segment. Residues 899 to 1131 (VSIQNLVKVY…LGTGYYLTLV (233 aa)) enclose the ABC transporter 1 domain. An ATP-binding site is contributed by 933 to 940 (GHNGAGKT). The helical transmembrane segment at 941-961 (TTMSILTGLFPPTSGTAYILG) threads the bilayer. Ser-1042 carries the phosphoserine; by PKA modification. S-palmitoyl cysteine attachment occurs at residues Cys-1110 and Cys-1111. Residues Asn-1144 and Asn-1294 are each glycosylated (N-linked (GlcNAc...) asparagine). The disordered stretch occupies residues 1285 to 1310 (FTEDDAVDPNDSDIDPESRETDLLSG). A compositionally biased stretch (acidic residues) spans 1287–1299 (EDDAVDPNDSDID). Ser-1296 bears the Phosphoserine mark. Residues 1351-1371 (IVLPAVFVCIALVFSLIVPPF) form a helical membrane-spanning segment. The Extracellular portion of the chain corresponds to 1372-1656 (GKYPSLELQP…ALMTTSVDVL (285 aa)). Residue Asn-1453 is glycosylated (N-linked (GlcNAc...) asparagine). Cys-1463 and Cys-1477 are joined by a disulfide. Asn-1499, Asn-1504, and Asn-1637 each carry an N-linked (GlcNAc...) asparagine glycan. The next 6 membrane-spanning stretches (helical) occupy residues 1657 to 1677 (VSIC…VFLI), 1703 to 1723 (FVWD…IFIC), 1735 to 1755 (LPVL…LMYP), 1768 to 1788 (VVLT…TFVL), 1802 to 1822 (ILKS…LIDM), and 1852 to 1872 (NLFA…LIQY). The ABC transporter 2 domain occupies 1912 to 2144 (LEIKELTKIY…FGDGYTIVVR (233 aa)). 1946 to 1953 (GVNGAGKS) serves as a coordination point for ATP. Asn-2044 carries N-linked (GlcNAc...) asparagine glycosylation. Ser-2054 is modified (phosphoserine; by PKA). A glycan (N-linked (GlcNAc...) asparagine) is linked at Asn-2238.

This sequence belongs to the ABC transporter superfamily. ABCA family. As to quaternary structure, interacts with MEGF10. May interact with APOE1; functionally associated with APOE1 in the biogenesis of HDLs. Interacts with ABCA8; this interaction potentiates cholesterol efflux. Interacts with ABCA12 and NR1H2; this interaction is required for ABCA1 localization to the cell surface and is necessary for its normal activity and stability. Post-translationally, phosphorylation on Ser-2054 regulates phospholipid efflux. In terms of processing, palmitoylated by ZDHHC8. Palmitoylation is essential for localization to the plasma membrane. Widely expressed in adult tissues. Highest levels are found in pregnant uterus and uterus.

It localises to the cell membrane. It is found in the endosome. The catalysed reaction is ATP + H2O + phospholipidSide 1 = ADP + phosphate + phospholipidSide 2.. The enzyme catalyses a 1,2-diacyl-sn-glycero-3-phosphocholine(out) + ATP + H2O = a 1,2-diacyl-sn-glycero-3-phosphocholine(in) + ADP + phosphate + H(+). It carries out the reaction a 1,2-diacyl-sn-glycero-3-phospho-L-serine(out) + ATP + H2O = a 1,2-diacyl-sn-glycero-3-phospho-L-serine(in) + ADP + phosphate + H(+). It catalyses the reaction a sphingomyelin(in) + ATP + H2O = a sphingomyelin(out) + ADP + phosphate + H(+). The catalysed reaction is cholesterol(in) + ATP + H2O = cholesterol(out) + ADP + phosphate + H(+). With respect to regulation, ATPase activity is decreased by cholesterol and ceramide. ATPase activity is stimulated by phosphatidylcholine and to a lesser degree by phosphatidylserine and sphingomyelin. Phospholipid translocase activity is highly reduced by berylium fluoride and aluminum flouride and reduced by N-ethylmaleimide. Its function is as follows. Catalyzes the translocation of specific phospholipids from the cytoplasmic to the extracellular/lumenal leaflet of membrane coupled to the hydrolysis of ATP. Thereby, participates in phospholipid transfer to apolipoproteins to form nascent high density lipoproteins/HDLs. Transports preferentially phosphatidylcholine over phosphatidylserine. May play a similar role in the efflux of intracellular cholesterol to apolipoproteins and the formation of nascent high density lipoproteins/HDLs. Translocates phospholipids from the outer face of the plasma membrane and forces it through its gateway and annulus into an elongated hydrophobic tunnel in its extracellular domain. The sequence is that of Phospholipid-transporting ATPase ABCA1 from Mus musculus (Mouse).